Here is a 483-residue protein sequence, read N- to C-terminus: Pentatricopeptide repeat-containing protein At5g18950 (483 aa).

PPR repeat units lie at residues 144–178 (EPTLLEQYVKCLSEEGLVEEAIEVYNVLKDMGISS), 179–213 (SVVTCNSVLLGCLKARKLDRFWELHKEMVESEFDS), 218–246 (CLIRALCDGGDVSEGYELLKQGLKQGLDP), 247–281 (GQYVYAKLISGFCEIGNYACMSEVLHTMIAWNHFP), 282–316 (SMYIYQKIIKGLCMNKKQLEAYCIFKNLKDKGYAP), 317–351 (DRVVYTTMIRGFCEKGWLGSARKLWFEMIKKGMRP), 352–386 (NEFAYNVMIHGHFKRGEISLVEAFYNEMLRNGYGG), 387–421 (TMLSCNTMIKGFCSHGKSDEAFEIFKNMSETGVTP), and 422–456 (NAITYNALIKGFCKENKVEKGLKLYKELKALGLKP).

The protein belongs to the PPR family. P subfamily.

The chain is Pentatricopeptide repeat-containing protein At5g18950 from Arabidopsis thaliana (Mouse-ear cress).